A 314-amino-acid polypeptide reads, in one-letter code: NAC domain-containing protein 10 (314 aa).

Over residues 18-39 the composition is skewed to polar residues; the sequence is VSNTDHPSVQLKDQSQSCVTSR. Disordered regions lie at residues 18-48 and 150-182; these read VSNT…SAET and YTTG…PVLS. The NAC domain occupies 77 to 236; sequence LPAGVKFDPS…EPVLSKVFYQ (160 aa). Over residues 160–171 the composition is skewed to basic and acidic residues; it reads VSTDEEGHETRW. The DNA-binding element occupies 187-242; it reads TGFKKILVLYTNYGRQKKPEKTNWVMHQYHLGSSEDEKDGEPVLSKVFYQTQPRQC.

As to expression, expressed in protoxylem and elongating interfascicular fiber cells of elongating internodes, developing metaxylem cells and interfascicular fibers of non-elongating internodes and developing secondary xylem of roots.

The protein localises to the nucleus. Transcriptional activator that plays a regulatory role in the development of secondary cell wall fibers. Is a direct target of SND1. The sequence is that of NAC domain-containing protein 10 from Arabidopsis thaliana (Mouse-ear cress).